The primary structure comprises 420 residues: Amino acid decarboxylase lolD1 (420 aa).

Residue lysine 62 is modified to N6-(pyridoxal phosphate)lysine. Pyridoxal 5'-phosphate-binding positions include serine 194, glycine 231, and 266 to 269 (EPGT). 315–316 (IV) provides a ligand contact to substrate. The active-site Proton donor; shared with dimeric partner is the cysteine 351. The residue at position 351 (cysteine 351) is an S-nitrosocysteine. Aspartate 352 provides a ligand contact to substrate. Residue tyrosine 381 participates in pyridoxal 5'-phosphate binding.

This sequence belongs to the Orn/Lys/Arg decarboxylase class-II family. As to quaternary structure, homodimer. Pyridoxal 5'-phosphate serves as cofactor.

It functions in the pathway alkaloid biosynthesis. Amino acid decarboxylase; part of the gene cluster that mediates the biosynthesis of loline alkaloids, potent insecticidal agents composed of a pyrrolizidine ring system and an uncommon ether bridge linking carbons 2 and 7. Lolines are structurally differentiated by the various modifications of the L-amino group and include norloline, loline, N-methylloline, N-acetylloline, N-acetylnorloline, and N-formylloline. The first committed step is the condensation of O-acetyl-L-homoserine (derived from L-aspartic acid) and L-proline, probably catalyzed by the gamma-type pyridoxal 5'-phosphate(PLP)-dependent enzyme lolC, to give the diamino diacid, NACPP. Ensuing cyclization, decarboxylation, and acetylation steps yield 1-exo-acetamidopyrrolizidine (AcAP). LolO is required for installation of the ether bridge upon the pathway intermediate, 1-exo-acetamidopyrrolizidine (AcAP). In sequential 2-oxoglutarate- and O(2)-consuming steps, lolO removes hydrogens from C2 and C7 of AcAP to form both carbon-oxygen bonds in N-acetylnorloline (NANL), the precursor to all other lolines. The enzymes lolD, lolE, lolF and lolT have also been proposed to be involved in the ether-bridge installation. Further processing of the exocyclic moiety of NANL by fungal N-acetamidase (LolN), methyltransferase (LolM), and cytochrome P450 (LolP) enzymes, with occasional involvement of a plant acetyltransferase, generates the other known lolines. LolN transforms NANL to norlonine which is monomethylated and dimethylated to respectively lonine and N-methyllonine (NML) by lolM. LolP catalyzes hydroxylation of the methyl group in N-methylloline (NML) and further oxygenation to N-formylloline (NFL). A plant acetyltransferase is responsible for the acetylation of loline to form N-acetylloline (NAL). LolA might interact with aspartate kinase to prevent feedback inhibition of its activity by these end products and thereby promote production of L-homoserine from L-aspartate. This Epichloe uncinata (Endophyte fungus) protein is Amino acid decarboxylase lolD1.